We begin with the raw amino-acid sequence, 269 residues long: uncharacterized protein (269 aa).

Belongs to the methyltransferase superfamily.

This is an uncharacterized protein from Mycobacterium leprae (strain Br4923).